The primary structure comprises 492 residues: Trichothecene C-15 hydroxylase (492 aa).

A helical membrane pass occupies residues 6-26 (LWPLLALSGGTGLAYLVVVVV). The segment covering 88 to 106 (AMKDVRGHRKSGEPEHGKD) has biased composition (basic and acidic residues). The segment at 88–116 (AMKDVRGHRKSGEPEHGKDPISVQSNGDN) is disordered. N-linked (GlcNAc...) asparagine glycans are attached at residues asparagine 124, asparagine 198, and asparagine 290. Cysteine 438 serves as a coordination point for heme.

This sequence belongs to the cytochrome P450 family. The cofactor is heme.

It is found in the membrane. It participates in sesquiterpene biosynthesis; trichothecene biosynthesis. Its function is as follows. Trichothecene C-15 hydroxylase; part of the core gene cluster that mediates the biosynthesis of trichothecenes, a very large family of chemically related bicyclic sesquiterpene compounds acting as mycotoxins, including T2-toxin. The biosynthesis of trichothecenes begins with the cyclization of farnesyl diphosphate to trichodiene and is catalyzed by the trichodiene synthase TRI5. Trichodiene undergoes a series of oxygenations catalyzed by the cytochrome P450 monooxygenase TRI4. TRI4 controls the addition of four oxygens at C-2, C-3, C-11, and the C-12, C-13-epoxide to form the intermediate isotrichotriol. Isotrichotriol then undergoes a non-enzymatic isomerization and cyclization to form isotrichodermol. During this process, the oxygen at the C-2 position becomes the pyran ring oxygen and the hydroxyl group at C-11 is lost. More complex type A trichothecenes are built by modifying isotrichodermol through a series of paired hydroxylation and acetylation or acylation steps. Isotrichodermol is converted to isotrichodermin by the acetyltransferase TRI101. TRI101 encodes a C-3 transacetylase that acts as a self-protection or resistance factor during biosynthesis and that the presence of a free C-3 hydroxyl group is a key component of Fusarium trichothecene phytotoxicity. A second hydroxyl group is added to C-15 by the trichothecene C-15 hydroxylase TRI11, producing 15-decalonectrin, which is then acetylated by TRI3, producing calonectrin. A third hydroxyl group is added at C-4 by the cytochrome P450 monooxygenase TRI13, converting calonectrin to 3,15-diacetoxyspirpenol, which is subsequently acetylated by the acetyltransferase TRI7. A fourth hydroxyl group is added to C-8 by the cytochrome P450 monooxygenase TRI1, followed by the addition of an isovaleryl moiety by TRI16. Finally, the acetyl group is removed from the C-3 position by the trichothecene C-3 esterase TRI8 to produce T-2 toxin. This is Trichothecene C-15 hydroxylase from Fusarium sporotrichioides.